The chain runs to 300 residues: Ribosomal protein L11 methyltransferase (300 aa).

Threonine 152, glycine 173, aspartate 195, and asparagine 234 together coordinate S-adenosyl-L-methionine.

Belongs to the methyltransferase superfamily. PrmA family.

It localises to the cytoplasm. The catalysed reaction is L-lysyl-[protein] + 3 S-adenosyl-L-methionine = N(6),N(6),N(6)-trimethyl-L-lysyl-[protein] + 3 S-adenosyl-L-homocysteine + 3 H(+). In terms of biological role, methylates ribosomal protein L11. The polypeptide is Ribosomal protein L11 methyltransferase (Burkholderia ambifaria (strain ATCC BAA-244 / DSM 16087 / CCUG 44356 / LMG 19182 / AMMD) (Burkholderia cepacia (strain AMMD))).